The following is a 202-amino-acid chain: Proteasome subunit beta 1 (202 aa).

A propeptide (removed in mature form; by autocatalysis) is located at residue M1. T2 (nucleophile) is an active-site residue.

The protein belongs to the peptidase T1B family. As to quaternary structure, the 20S proteasome core is composed of 14 alpha and 14 beta subunits that assemble into four stacked heptameric rings, resulting in a barrel-shaped structure. The two inner rings, each composed of seven catalytic beta subunits, are sandwiched by two outer rings, each composed of seven alpha subunits. The catalytic chamber with the active sites is on the inside of the barrel. Has a gated structure, the ends of the cylinder being occluded by the N-termini of the alpha-subunits. Is capped at one or both ends by the proteasome regulatory ATPase, PAN.

It localises to the cytoplasm. The enzyme catalyses Cleavage of peptide bonds with very broad specificity.. The formation of the proteasomal ATPase PAN-20S proteasome complex, via the docking of the C-termini of PAN into the intersubunit pockets in the alpha-rings, triggers opening of the gate for substrate entry. Interconversion between the open-gate and close-gate conformations leads to a dynamic regulation of the 20S proteasome proteolysis activity. Its function is as follows. Component of the proteasome core, a large protease complex with broad specificity involved in protein degradation. This chain is Proteasome subunit beta 1, found in Pyrobaculum arsenaticum (strain DSM 13514 / JCM 11321 / PZ6).